The sequence spans 100 residues: Large ribosomal subunit protein uL23 (100 aa).

It belongs to the universal ribosomal protein uL23 family. In terms of assembly, part of the 50S ribosomal subunit. Contacts protein L29, and trigger factor when it is bound to the ribosome.

Its function is as follows. One of the early assembly proteins it binds 23S rRNA. One of the proteins that surrounds the polypeptide exit tunnel on the outside of the ribosome. Forms the main docking site for trigger factor binding to the ribosome. This Baumannia cicadellinicola subsp. Homalodisca coagulata protein is Large ribosomal subunit protein uL23.